A 62-amino-acid chain; its full sequence is Photosystem II reaction center protein Z (62 aa).

Transmembrane regions (helical) follow at residues 8–28 (AVFALIATSLILLISVPVVFA) and 41–61 (FSGTSLWIGLVFLVGILNSLI).

The protein belongs to the PsbZ family. PSII is composed of 1 copy each of membrane proteins PsbA, PsbB, PsbC, PsbD, PsbE, PsbF, PsbH, PsbI, PsbJ, PsbK, PsbL, PsbM, PsbT, PsbY, PsbZ, Psb30/Ycf12, at least 3 peripheral proteins of the oxygen-evolving complex and a large number of cofactors. It forms dimeric complexes.

Its subcellular location is the plastid. The protein localises to the chloroplast thylakoid membrane. In terms of biological role, may control the interaction of photosystem II (PSII) cores with the light-harvesting antenna, regulates electron flow through the 2 photosystem reaction centers. PSII is a light-driven water plastoquinone oxidoreductase, using light energy to abstract electrons from H(2)O, generating a proton gradient subsequently used for ATP formation. This is Photosystem II reaction center protein Z from Nicotiana sylvestris (Wood tobacco).